The chain runs to 1462 residues: DNA polymerase III PolC-type (1462 aa).

An Exonuclease domain is found at 424–580; sequence YVVFDVETTG…YDAEATGRLL (157 aa).

This sequence belongs to the DNA polymerase type-C family. PolC subfamily.

It is found in the cytoplasm. The catalysed reaction is DNA(n) + a 2'-deoxyribonucleoside 5'-triphosphate = DNA(n+1) + diphosphate. Functionally, required for replicative DNA synthesis. This DNA polymerase also exhibits 3' to 5' exonuclease activity. In Streptococcus sanguinis (strain SK36), this protein is DNA polymerase III PolC-type.